A 769-amino-acid chain; its full sequence is Cap-specific mRNA (nucleoside-2'-O-)-methyltransferase 2 (769 aa).

Positions 109 to 322 (ELCTQAWCKF…VYVVCLYYKG (214 aa)) constitute an Adrift-type SAM-dependent 2'-O-MTase domain. Residue Lys-117 is part of the active site. S-adenosyl-L-methionine is bound by residues Gly-148, Trp-167, and Asp-235. Asp-235 is a catalytic residue. Lys-275 (proton acceptor) is an active-site residue.

Its subcellular location is the nucleus. It is found in the cytoplasm. The catalysed reaction is a 5'-end (N(7)-methyl 5'-triphosphoguanosine)-(2'-O-methyl-ribonucleoside)-(ribonucleotide) in mRNA + S-adenosyl-L-methionine = a 5'-end (N(7)-methyl 5'-triphosphoguanosine)-(2'-O-methyl-ribonucleoside)-(2'-O-methyl-ribonucleotide) in mRNA + S-adenosyl-L-homocysteine + H(+). Functionally, S-adenosyl-L-methionine-dependent methyltransferase that mediates mRNA cap2 2'-O-ribose methylation to the 5'-cap structure of mRNAs. Methylates the ribose of the second nucleotide of a m(7)GpppG-capped mRNA and small nuclear RNA (snRNA) (cap0) to produce m(7)GpppRmpNm (cap2). Recognizes a guanosine cap on RNA independently of its N(7) methylation status. Display cap2 methylation on both cap0 and cap1. Displays a preference for cap1 RNAs. This chain is Cap-specific mRNA (nucleoside-2'-O-)-methyltransferase 2 (CMTR2), found in Pongo abelii (Sumatran orangutan).